The chain runs to 100 residues: Guanine nucleotide-binding protein subunit gamma 2 (100 aa).

Met-1 is subject to N-acetylmethionine. Positions 19 to 55 form a coiled coil; it reads TRGKHRIQAELKRLEQEARFLEEELEQLEKMDNASAS. One can recognise a G protein gamma domain in the interval 21-100; sequence GKHRIQAELK…EAKRCGCSIL (80 aa). A regulates lipidation and cell membrane subcellular localization region spans residues 90–96; that stretch reads KEAKRCG. Cys-95 carries the S-palmitoyl cysteine lipid modification. Cys-97 carries the cysteine methyl ester modification. Residue Cys-97 is the site of S-farnesyl cysteine attachment. Residues 98–100 constitute a propeptide, removed in mature form; the sequence is SIL.

G proteins are composed of 3 units, alpha, beta and gamma. GPG1 interacts with the beta subunit GB1. The dimer GB1-GG2 interacts with NDL1, NDL2 and NDL3. Binds to NUDT7. As to expression, mostly expressed in roots (excluded from the stele), seedlings (especially at the hypocotyl/root junction), floral stems, floral buds, flowers and siliques, and, to a lower extent, in leaves (restricted to guard cells). Also present in hydathods.

It is found in the cell membrane. Guanine nucleotide-binding proteins (G proteins) are involved as a modulator or transducer in various transmembrane signaling systems. The beta and gamma chains are required for the GTPase activity, for replacement of GDP by GTP, and for G protein-effector interaction. Involved in the abscisic acid (ABA) and ethylene signaling pathways. Regulates basipetal transport of auxin (IAA) in roots and hypocotyls, and thus modulates root architecture (e.g. lateral root formation). The heterotrimeric G-protein controls defense responses to necrotrophic and vascular fungi probably by modulating cell wall-related genes expression; involved in resistance to Plectosphaerella cucumerina. The sequence is that of Guanine nucleotide-binding protein subunit gamma 2 (GG2) from Arabidopsis thaliana (Mouse-ear cress).